The following is a 104-amino-acid chain: Small ribosomal subunit protein bS18c (104 aa).

The segment at D84–K104 is disordered.

The protein belongs to the bacterial ribosomal protein bS18 family. As to quaternary structure, part of the 30S ribosomal subunit.

It localises to the plastid. The protein resides in the chloroplast. The sequence is that of Small ribosomal subunit protein bS18c from Cucumis sativus (Cucumber).